The primary structure comprises 783 residues: Lon protease (783 aa).

In terms of domain architecture, Lon N-terminal spans 11-203 (IPVLPLRDVV…FLMGQMESEI (193 aa)). 355–362 (GPPGVGKT) contacts ATP. One can recognise a Lon proteolytic domain in the interval 591–772 (SNRIGQVTGL…DEVLKVALER (182 aa)). Active-site residues include S678 and K721.

It belongs to the peptidase S16 family. In terms of assembly, homohexamer. Organized in a ring with a central cavity.

The protein resides in the cytoplasm. The catalysed reaction is Hydrolysis of proteins in presence of ATP.. ATP-dependent serine protease that mediates the selective degradation of mutant and abnormal proteins as well as certain short-lived regulatory proteins. Required for cellular homeostasis and for survival from DNA damage and developmental changes induced by stress. Degrades polypeptides processively to yield small peptide fragments that are 5 to 10 amino acids long. Binds to DNA in a double-stranded, site-specific manner. Regulates swarmer cell differentiation of V.parahaemolyticus. In Vibrio parahaemolyticus serotype O3:K6 (strain RIMD 2210633), this protein is Lon protease.